The following is a 479-amino-acid chain: Probable polyamine transporter At3g19553 (479 aa).

12 helical membrane passes run 22–42, 53–73, 86–106, 130–150, 160–180, 236–256, 275–295, 304–324, 332–352, 355–375, 395–415, and 420–440; these read LTLL…PFGV, LLAL…EALV, GYVV…EGFW, FPVL…TFSL, IVGF…VVMA, ALFG…MAGT, VGML…AAMS, MSSD…PAFF, TPTI…WMSF, IIEF…AAFV, FGVS…MVLA, and FLIS…LTLV. Residues 454-479 are disordered; it reads RPVSGVSSESQLDEEHGDESAASLLP.

This sequence belongs to the amino acid-polyamine-organocation (APC) superfamily. Polyamine:cation symporter (PHS) (TC 2.A.3.12) family.

Its subcellular location is the cell membrane. Probable cell membrane polyamine/proton symporter involved in the polyamine uptake in cells. The protein is Probable polyamine transporter At3g19553 of Arabidopsis thaliana (Mouse-ear cress).